The sequence spans 112 residues: uncharacterized protein (112 aa).

The N-terminal stretch at methionine 1–alanine 25 is a signal peptide.

This is an uncharacterized protein from Mycobacterium tuberculosis (strain CDC 1551 / Oshkosh).